Here is a 293-residue protein sequence, read N- to C-terminus: Nucleotide-binding protein BCQ_4976 (293 aa).

Position 14-21 (14-21 (GMSGAGKT)) interacts with ATP. A GTP-binding site is contributed by 65–68 (DLRG).

The protein belongs to the RapZ-like family.

In terms of biological role, displays ATPase and GTPase activities. This Bacillus cereus (strain Q1) protein is Nucleotide-binding protein BCQ_4976.